A 261-amino-acid polypeptide reads, in one-letter code: Triosephosphate isomerase (261 aa).

Positions 11 and 13 each coordinate D-glyceraldehyde 3-phosphate. Residue histidine 102 is the Electrophile of the active site. Catalysis depends on glutamate 174, which acts as the Proton acceptor. D-glyceraldehyde 3-phosphate-binding residues include glycine 180, leucine 239, and glycine 241.

This sequence belongs to the triosephosphate isomerase family. Homodimer.

The catalysed reaction is D-glyceraldehyde 3-phosphate = dihydroxyacetone phosphate. The protein operates within carbohydrate biosynthesis; gluconeogenesis. It functions in the pathway carbohydrate degradation; glycolysis; D-glyceraldehyde 3-phosphate from glycerone phosphate: step 1/1. Functionally, catalyzes the interconversion of glyceraldehyde 3-phosphate and dihydroxyacetone phosphate in the glycolytic and gluconeogenic pathways. The polypeptide is Triosephosphate isomerase (Entamoeba histolytica (strain ATCC 30459 / HM-1:IMSS / ABRM)).